The following is a 350-amino-acid chain: MLPEWVYHKCPEISAVHRDAAIVRQAQLTKPTGALGRLEQLAIELAGLQATEQPRAARVPIIIFAGDHGIVAQGVSAYPQAVTIAMMANFASGGAAISVLARELGSHLEVVDAGTLSQDEMIGIVTDRPRHGTRDFSVEAALTLAELAFAFEAGERAVARAAASQPDLLIFGEMGIGNTTTSAAIAASLLGVSAEEIAGSGTGVDAAGRAHKARVIDAAIVRHGVAAASPEKILCAVGGLEIAAICGAIIAAAQRRIPVLIDGFIVSVAALAAVRLNPSCQPFLLPSHQSAEQGHRLVLRALNVQPLISLDLRLGEGSGAAIALPLVRSACALHNGMATFAQANVPDRPA.

Glu-316 (proton acceptor) is an active-site residue.

This sequence belongs to the CobT family.

It carries out the reaction 5,6-dimethylbenzimidazole + nicotinate beta-D-ribonucleotide = alpha-ribazole 5'-phosphate + nicotinate + H(+). It functions in the pathway nucleoside biosynthesis; alpha-ribazole biosynthesis; alpha-ribazole from 5,6-dimethylbenzimidazole: step 1/2. Functionally, catalyzes the synthesis of alpha-ribazole-5'-phosphate from nicotinate mononucleotide (NAMN) and 5,6-dimethylbenzimidazole (DMB). The chain is Nicotinate-nucleotide--dimethylbenzimidazole phosphoribosyltransferase from Bradyrhizobium diazoefficiens (strain JCM 10833 / BCRC 13528 / IAM 13628 / NBRC 14792 / USDA 110).